A 359-amino-acid chain; its full sequence is Biotin synthase (359 aa).

Positions 67–302 constitute a Radical SAM core domain; that stretch reads CCGNRVDLCS…QQILRYAGGR (236 aa). The [4Fe-4S] cluster site is built by Cys-85, Cys-89, and Cys-92. [2Fe-2S] cluster contacts are provided by Cys-130, Cys-167, Cys-227, and Arg-297.

It belongs to the radical SAM superfamily. Biotin synthase family. In terms of assembly, homodimer. Requires [4Fe-4S] cluster as cofactor. The cofactor is [2Fe-2S] cluster.

It catalyses the reaction (4R,5S)-dethiobiotin + (sulfur carrier)-SH + 2 reduced [2Fe-2S]-[ferredoxin] + 2 S-adenosyl-L-methionine = (sulfur carrier)-H + biotin + 2 5'-deoxyadenosine + 2 L-methionine + 2 oxidized [2Fe-2S]-[ferredoxin]. The protein operates within cofactor biosynthesis; biotin biosynthesis; biotin from 7,8-diaminononanoate: step 2/2. Functionally, catalyzes the conversion of dethiobiotin (DTB) to biotin by the insertion of a sulfur atom into dethiobiotin via a radical-based mechanism. This Gloeothece citriformis (strain PCC 7424) (Cyanothece sp. (strain PCC 7424)) protein is Biotin synthase.